Here is a 532-residue protein sequence, read N- to C-terminus: CTP synthase (532 aa).

Residues 1 to 267 (MTKYIFVTGG…DDIVLEHLQL (267 aa)) form an amidoligase domain region. Residue serine 13 coordinates CTP. A UTP-binding site is contributed by serine 13. Residue 14–19 (SIGKGI) participates in ATP binding. Position 54 (tyrosine 54) interacts with L-glutamine. Position 71 (aspartate 71) interacts with ATP. Residues aspartate 71 and glutamate 141 each coordinate Mg(2+). CTP contacts are provided by residues 148–150 (DIE), 188–193 (KTKPTQ), and lysine 224. UTP contacts are provided by residues 188-193 (KTKPTQ) and lysine 224. A Glutamine amidotransferase type-1 domain is found at 292-532 (RIGLVGKYVS…DFVGAALNNK (241 aa)). Glycine 354 lines the L-glutamine pocket. Cysteine 381 serves as the catalytic Nucleophile; for glutamine hydrolysis. L-glutamine is bound by residues 382–385 (LGMQ), glutamate 405, and arginine 462. Active-site residues include histidine 507 and glutamate 509.

The protein belongs to the CTP synthase family. Homotetramer.

The enzyme catalyses UTP + L-glutamine + ATP + H2O = CTP + L-glutamate + ADP + phosphate + 2 H(+). The catalysed reaction is L-glutamine + H2O = L-glutamate + NH4(+). It carries out the reaction UTP + NH4(+) + ATP = CTP + ADP + phosphate + 2 H(+). It participates in pyrimidine metabolism; CTP biosynthesis via de novo pathway; CTP from UDP: step 2/2. With respect to regulation, allosterically activated by GTP, when glutamine is the substrate; GTP has no effect on the reaction when ammonia is the substrate. The allosteric effector GTP functions by stabilizing the protein conformation that binds the tetrahedral intermediate(s) formed during glutamine hydrolysis. Inhibited by the product CTP, via allosteric rather than competitive inhibition. Catalyzes the ATP-dependent amination of UTP to CTP with either L-glutamine or ammonia as the source of nitrogen. Regulates intracellular CTP levels through interactions with the four ribonucleotide triphosphates. This Listeria innocua serovar 6a (strain ATCC BAA-680 / CLIP 11262) protein is CTP synthase.